Consider the following 1047-residue polypeptide: UPF0182 protein Mlut_14990 (1047 aa).

Composition is skewed to gly residues over residues 1-27 (MSFG…GQSG) and 49-59 (GPGGPFGGGGS). A disordered region spans residues 1–66 (MSFGQGGGGP…GGSSAARGRG (66 aa)). A run of 7 helical transmembrane segments spans residues 71 to 91 (PSAL…FVVF), 114 to 134 (VLAK…AVWL), 168 to 188 (LVFL…AMNG), 214 to 234 (FFMA…SVVL), 266 to 286 (AHIG…FWLN), 314 to 334 (AILA…VVSG), and 341 to 361 (IGTA…PFIV). Disordered stretches follow at residues 544-568 (GAPA…TFSG), 941-965 (GDSG…PTAP), and 1007-1047 (EALK…TPSG). Residues 555–565 (TADSQEDTAYT) are compositionally biased toward polar residues. Positions 1015–1037 (ADDALGGDAPAQEQAPAEASPAP) are enriched in low complexity. Pro residues predominate over residues 1038–1047 (SSSPSPTPSG).

Belongs to the UPF0182 family.

The protein localises to the cell membrane. The chain is UPF0182 protein Mlut_14990 from Micrococcus luteus (strain ATCC 4698 / DSM 20030 / JCM 1464 / CCM 169 / CCUG 5858 / IAM 1056 / NBRC 3333 / NCIMB 9278 / NCTC 2665 / VKM Ac-2230) (Micrococcus lysodeikticus).